Reading from the N-terminus, the 137-residue chain is Large ribosomal subunit protein uL16 (137 aa).

This sequence belongs to the universal ribosomal protein uL16 family. Part of the 50S ribosomal subunit.

In terms of biological role, binds 23S rRNA and is also seen to make contacts with the A and possibly P site tRNAs. This Streptococcus equi subsp. zooepidemicus (strain H70) protein is Large ribosomal subunit protein uL16.